The chain runs to 251 residues: SRR1-like protein (251 aa).

This sequence belongs to the SRR1 family.

It localises to the cytoplasm. The protein localises to the nucleus. This is SRR1-like protein from Schizosaccharomyces pombe (strain 972 / ATCC 24843) (Fission yeast).